Consider the following 64-residue polypeptide: Translation machinery-associated protein 7 homolog (64 aa).

Residues 1 to 64 (MSGREGGKKK…QGGIKKSGKK (64 aa)) are disordered. Positions 27-44 (VAFKQKQKEQQKALDAAK) are enriched in basic and acidic residues.

This sequence belongs to the TMA7 family.

The protein is Translation machinery-associated protein 7 homolog of Anopheles funestus (African malaria mosquito).